Consider the following 199-residue polypeptide: dITP/XTP pyrophosphatase (199 aa).

Residue 8 to 13 (TSNKNK) participates in substrate binding. The Mg(2+) site is built by Glu40 and Asp68. The Proton acceptor role is filled by Asp68. Residues Ser69, 154–157 (FGYD), Lys177, and 182–183 (HR) contribute to the substrate site.

The protein belongs to the HAM1 NTPase family. As to quaternary structure, homodimer. The cofactor is Mg(2+).

It catalyses the reaction XTP + H2O = XMP + diphosphate + H(+). The enzyme catalyses dITP + H2O = dIMP + diphosphate + H(+). The catalysed reaction is ITP + H2O = IMP + diphosphate + H(+). Its function is as follows. Pyrophosphatase that catalyzes the hydrolysis of nucleoside triphosphates to their monophosphate derivatives, with a high preference for the non-canonical purine nucleotides XTP (xanthosine triphosphate), dITP (deoxyinosine triphosphate) and ITP. Seems to function as a house-cleaning enzyme that removes non-canonical purine nucleotides from the nucleotide pool, thus preventing their incorporation into DNA/RNA and avoiding chromosomal lesions. The sequence is that of dITP/XTP pyrophosphatase from Wigglesworthia glossinidia brevipalpis.